A 1141-amino-acid polypeptide reads, in one-letter code: cGMP-inhibited 3',5'-cyclic phosphodiesterase 3A (1141 aa).

The disordered stretch occupies residues 1–41 (MAVRGEAAQDWAKPGLRGPSPAPVARGDHRCRGGSPSSPRG). Residues 62–82 (SALCAGSLSVLLALLVRLVGG) traverse the membrane as a helical segment. The segment at 89-111 (ESSQEAAAEEEEEEGARGGVFPG) is disordered. Helical transmembrane passes span 127-147 (LQPAALLFSLLCAFFWMGLCL), 157-177 (AVALLAACCAGEALVQLSLGV), 182-202 (LLSLPAAGVLLSCLGGATWLV), 207-227 (LGVLMVALTSALRTVALVSLE), and 229-249 (FKVAWRPYLAYLAAVLGLLLA). A disordered region spans residues 262–309 (PAPPRERFGSQSSARTKEEIPGWKRRRRSSSVVAGEMSGCGGKSHRRT). Ser-310 is subject to Phosphoserine. The span at 433–445 (RVSSTWTTTTSAT) shows a compositional bias: low complexity. Residues 433–479 (RVSSTWTTTTSATGLPTLEPAPVRRDRSASIKPHEAPSPSAVNPDSW) form a disordered region. Basic and acidic residues predominate over residues 454–467 (PVRRDRSASIKPHE). Ser-492, Ser-520, Ser-524, and Ser-533 each carry phosphoserine. The segment at 504–643 (HVKAKKQNRP…SDILQNDEEA (140 aa)) is disordered. Pro residues predominate over residues 522-532 (VPSPSSSPPQG). The segment covering 618–637 (TSQVTSDYETNNNSDSSDIL) has biased composition (polar residues). Positions 669 to 1141 (KPILAPEPLV…EETLAPQPDL (473 aa)) are interaction with SLFN12. The PDEase domain maps to 674–1093 (PEPLVMDNLD…MMWKKVIEEE (420 aa)). The active-site Proton donor is the His-752. His-752 contributes to the AMP binding site. Mn(2+) is bound by residues His-756, His-836, Asp-837, and Asp-950. Positions 837, 950, and 1001 each coordinate AMP. Asp-837 contacts Mg(2+). 2 disordered regions span residues 1024 to 1062 (GKWVDDSDDSGDTDDPEEEEEEAETPHEEETCENSEAPR) and 1098 to 1141 (GTEN…QPDL). Over residues 1029-1046 (DSDDSGDTDDPEEEEEEA) the composition is skewed to acidic residues. Phosphoserine is present on Ser-1033. Phosphothreonine is present on Thr-1036. A compositionally biased stretch (polar residues) spans 1098-1113 (GTENQAPDQAPLQHSS). Lys-1120 is covalently cross-linked (Glycyl lysine isopeptide (Lys-Gly) (interchain with G-Cter in SUMO2)).

Belongs to the cyclic nucleotide phosphodiesterase family. PDE3 subfamily. Homodimer. Interacts with PDE3A; direct low affinity interaction which is stimulated by binding of 17beta-estradiol/E2 to PDE3A and that positively regulates the ribonuclease activity of SLFN12. It depends on Mn(2+) as a cofactor. Mg(2+) is required as a cofactor.

The protein localises to the membrane. It localises to the cytoplasm. Its subcellular location is the cytosol. It catalyses the reaction a nucleoside 3',5'-cyclic phosphate + H2O = a nucleoside 5'-phosphate + H(+). It carries out the reaction 3',5'-cyclic AMP + H2O = AMP + H(+). The enzyme catalyses 3',5'-cyclic GMP + H2O = GMP + H(+). The catalysed reaction is 3',5'-cyclic UMP + H2O = UMP + H(+). Functionally, cyclic nucleotide phosphodiesterase with specificity for the second messengers cAMP and cGMP, which are key regulators of many important physiological processes. Also has activity toward cUMP. Independently of its catalytic activity it is part of an E2/17beta-estradiol-induced pro-apoptotic signaling pathway. E2 stabilizes the PDE3A/SLFN12 complex in the cytosol, promoting the dephosphorylation of SLFN12 and activating its pro-apoptotic ribosomal RNA/rRNA ribonuclease activity. This apoptotic pathway might be relevant in tissues with high concentration of E2 and be for instance involved in placenta remodeling. The protein is cGMP-inhibited 3',5'-cyclic phosphodiesterase 3A of Rattus norvegicus (Rat).